Here is a 210-residue protein sequence, read N- to C-terminus: Uridine kinase (210 aa).

Position 12-19 (12-19 (GGSGSGKT)) interacts with ATP.

This sequence belongs to the uridine kinase family.

The protein localises to the cytoplasm. It carries out the reaction uridine + ATP = UMP + ADP + H(+). The enzyme catalyses cytidine + ATP = CMP + ADP + H(+). It participates in pyrimidine metabolism; CTP biosynthesis via salvage pathway; CTP from cytidine: step 1/3. Its pathway is pyrimidine metabolism; UMP biosynthesis via salvage pathway; UMP from uridine: step 1/1. The chain is Uridine kinase from Leuconostoc citreum (strain KM20).